The chain runs to 161 residues: Protein yippee-like B0546.4 (161 aa).

The Yippee domain maps to 14-111 (SLYGCVVCNT…IENANFEKIA (98 aa)). Residues C18, C21, C74, and C77 each coordinate Zn(2+). The interval 117 to 161 (PLGEDRQEAPPAPNLEMSRYPLEAEKKSRPQYRTVSVSSSSSAEC) is disordered. Residues 151 to 161 (VSVSSSSSAEC) are compositionally biased toward low complexity.

This sequence belongs to the yippee family.

The chain is Protein yippee-like B0546.4 from Caenorhabditis elegans.